The primary structure comprises 492 residues: 3-octaprenyl-4-hydroxybenzoate carboxy-lyase (492 aa).

Position 175 (Asn-175) interacts with Mn(2+). Prenylated FMN is bound by residues 178 to 180 (IYR), 192 to 194 (RWL), and 197 to 198 (RG). Mn(2+) is bound at residue Glu-241. The Proton donor role is filled by Asp-290.

It belongs to the UbiD family. In terms of assembly, homohexamer. Prenylated FMN serves as cofactor. Requires Mn(2+) as cofactor.

It localises to the cell membrane. It carries out the reaction a 4-hydroxy-3-(all-trans-polyprenyl)benzoate + H(+) = a 2-(all-trans-polyprenyl)phenol + CO2. Its pathway is cofactor biosynthesis; ubiquinone biosynthesis. In terms of biological role, catalyzes the decarboxylation of 3-octaprenyl-4-hydroxy benzoate to 2-octaprenylphenol, an intermediate step in ubiquinone biosynthesis. This chain is 3-octaprenyl-4-hydroxybenzoate carboxy-lyase, found in Salmonella typhimurium (strain LT2 / SGSC1412 / ATCC 700720).